The chain runs to 516 residues: 3-ketoacyl-CoA synthase 4 (516 aa).

The next 2 helical transmembrane spans lie at 48-68 (LISN…SVEA) and 87-107 (LVSI…YVMT). In terms of domain architecture, FAE spans 104 to 393 (YVMTRPRPVY…FFMTLVVKKL (290 aa)). Active-site residues include Cys-248, His-327, His-411, His-415, His-444, and Asn-448.

Belongs to the thiolase-like superfamily. Chalcone/stilbene synthases family. In terms of tissue distribution, expressed at low levels in siliques, flowers, leaves and stems.

It localises to the membrane. The enzyme catalyses a very-long-chain acyl-CoA + malonyl-CoA + H(+) = a very-long-chain 3-oxoacyl-CoA + CO2 + CoA. It functions in the pathway lipid metabolism; fatty acid biosynthesis. The chain is 3-ketoacyl-CoA synthase 4 from Arabidopsis thaliana (Mouse-ear cress).